The primary structure comprises 481 residues: Phosphoglucosamine mutase (481 aa).

The active-site Phosphoserine intermediate is Ser129. Mg(2+) contacts are provided by Ser129, Asp271, Asp273, and Asp275. Ser129 is subject to Phosphoserine.

It belongs to the phosphohexose mutase family. Mg(2+) serves as cofactor. In terms of processing, activated by phosphorylation.

It catalyses the reaction alpha-D-glucosamine 1-phosphate = D-glucosamine 6-phosphate. Its function is as follows. Catalyzes the conversion of glucosamine-6-phosphate to glucosamine-1-phosphate. The polypeptide is Phosphoglucosamine mutase (Picosynechococcus sp. (strain ATCC 27264 / PCC 7002 / PR-6) (Agmenellum quadruplicatum)).